The chain runs to 258 residues: CDP-diacylglycerol pyrophosphatase (258 aa).

A helical transmembrane segment spans residues 10-30 (YLLTLLILIILAAGLIYKLRF).

This sequence belongs to the Cdh family.

The protein localises to the cell inner membrane. It carries out the reaction a CDP-1,2-diacyl-sn-glycerol + H2O = a 1,2-diacyl-sn-glycero-3-phosphate + CMP + 2 H(+). Its pathway is phospholipid metabolism; CDP-diacylglycerol degradation; phosphatidate from CDP-diacylglycerol: step 1/1. This Yersinia pestis protein is CDP-diacylglycerol pyrophosphatase (cdh).